The following is an 833-amino-acid chain: ERAD-associated E3 ubiquitin-protein ligase component HRD3 (833 aa).

The first 19 residues, 1–19, serve as a signal peptide directing secretion; it reads MLLSTYLNWASVLLTIAGA. N-linked (GlcNAc...) asparagine glycosylation is found at Asn105, Asn127, and Asn146. A Sel1-like 1 repeat occupies 107–143; it reads TEAMYKLSQINLWGQYGYPHNKSVAFQYLQKFNDMTS. Sel1-like repeat units lie at residues 147 to 184 and 185 to 220; these read SSAL…RLGD and LKAK…EEIK. Asn424 and Asn607 each carry an N-linked (GlcNAc...) asparagine glycan. 2 Sel1-like repeats span residues 592-623 and 624-659; these read TDAA…LKFS and AQAL…EHNQ. N-linked (GlcNAc...) asparagine glycosylation is found at Asn688 and Asn713. Residues 752 to 772 form a helical membrane-spanning segment; it reads LLTMVCVLIIFAISMFFRTVA. Residues 789-818 form a disordered region; that stretch reads GNALGEEGNPENENEEDDENDDEGRARARN. A compositionally biased stretch (acidic residues) spans 796 to 810; sequence GNPENENEEDDENDD.

It belongs to the sel-1 family. As to quaternary structure, interacts with HRD1.

The protein localises to the endoplasmic reticulum membrane. In terms of biological role, component of the endoplasmic reticulum quality control (ERQC) system involved in ubiquitin-dependent degradation of missfolded endoplasmic reticulum proteins. Component of the HRD1 ubiquitin ligase complex, which is part of the ERAD-L and ERAD-M pathways responsible for the rapid degradation of soluble lumenal and membrane proteins with misfolded lumenal domains (ERAD-L), or ER-membrane proteins with misfolded transmembrane domains (ERAD-M). ERAD-L substrates are ubiquitinated through HRD1 in conjunction with the E2 ubiquitin-conjugating enzymes UBC1 and UBC7-CUE1. Ubiquitinated substrates are then removed to the cytosol via the action of the UFD1-NPL4-CDC48/p97 (UNC) AAA ATPase complex and targeted to the proteasome. ERAD-M substrates are processed by the same HRD1-HRD3 core complex, but only a subset of the other components is required for ERAD-M. Stabilizes the HRD1 ubiquitin-protein ligase. Also has a function in recruiting misfolded protein substrates. The sequence is that of ERAD-associated E3 ubiquitin-protein ligase component HRD3 (HRD3) from Candida glabrata (strain ATCC 2001 / BCRC 20586 / JCM 3761 / NBRC 0622 / NRRL Y-65 / CBS 138) (Yeast).